Here is a 634-residue protein sequence, read N- to C-terminus: SPARC-like protein 1 (634 aa).

An N-terminal signal peptide occupies residues 1 to 16 (MKAVLLLLYALGIAAA). Residues 50–335 (ADIEKHPNHK…DDSKHGASDD (286 aa)) form a disordered region. Basic and acidic residues predominate over residues 51–62 (DIEKHPNHKAEK). Residues serine 68, serine 76, and serine 84 each carry the phosphoserine modification. The segment covering 73 to 83 (HEQSTEQDKTY) has biased composition (basic and acidic residues). Over residues 89–99 (LKDEEDGDGDL) the composition is skewed to acidic residues. A compositionally biased stretch (polar residues) spans 131 to 144 (TVSTPFVDSDQPAN). A glycan (N-linked (GlcNAc...) asparagine) is linked at asparagine 144. Serine 151 and serine 159 each carry phosphoserine. Composition is skewed to acidic residues over residues 189 to 198 (EKEEEEDPED) and 205 to 214 (NQEEEKEPPE). The span at 233-258 (QESSQPTQISKTKNDFEQGSQGQEGD) shows a compositional bias: polar residues. Phosphoserine is present on serine 259. Basic and acidic residues-rich tracts occupy residues 263–276 (GEDK…HLPH) and 292–303 (GNRKDTDEEKAV). Phosphoserine occurs at positions 333 and 340. The segment at 360–398 (EETPDESENRSEAGDNQGAKKAESSPNAEPSDEGNSRGH) is disordered. Residues 366–382 (SENRSEAGDNQGAKKAE) are compositionally biased toward basic and acidic residues. N-linked (GlcNAc...) asparagine glycosylation occurs at asparagine 368. 2 positions are modified to phosphoserine: serine 370 and serine 390. A Follistatin-like domain is found at 402 to 424 (SCMNFQCKRGHTCKTDQHGKPHC). Disulfide bonds link cysteine 403–cysteine 414, cysteine 408–cysteine 424, cysteine 426–cysteine 460, cysteine 432–cysteine 453, cysteine 442–cysteine 479, cysteine 485–cysteine 596, and cysteine 604–cysteine 620. A Kazal-like domain is found at 420 to 481 (GKPHCVCQDP…QLDYFGACKS (62 aa)). Asparagine 446 carries N-linked (GlcNAc...) asparagine glycosylation. The 36-residue stretch at 592–627 (PMEHCITRFFEECDPNKDKHITLKEWGHCFGIKEED) folds into the EF-hand domain. Residues aspartate 605, asparagine 607, aspartate 609, histidine 611, and glutamate 616 each contribute to the Ca(2+) site.

This sequence belongs to the SPARC family. As to expression, expressed in many types of neurons in the brain.

The protein localises to the secreted. It localises to the extracellular space. It is found in the extracellular matrix. The protein is SPARC-like protein 1 (Sparcl1) of Rattus norvegicus (Rat).